An 800-amino-acid polypeptide reads, in one-letter code: General transcription and DNA repair factor IIH helicase/translocase subunit XPB (800 aa).

The disordered stretch occupies residues 1–27 (MSSGDSNLKRRRGGNTGQSSKSYNTWT). The segment covering 17–27 (GQSSKSYNTWT) has biased composition (polar residues). Positions 329-491 (MFGNGRARSG…DLNFLIGPKL (163 aa)) constitute a Helicase ATP-binding domain. 342–349 (LPCGAGKS) is a binding site for ATP. Positions 444-447 (DEVH) match the DEVH box motif. Residues 546-704 (RACEYLIRFH…ELPGIDQEVN (159 aa)) form the Helicase C-terminal domain. The tract at residues 743-769 (GAKKSKSSAPTVSRTTGGSTRALSGGN) is disordered. Over residues 749-764 (SSAPTVSRTTGGSTRA) the composition is skewed to polar residues.

It belongs to the helicase family. RAD25/XPB subfamily. Component of the 7-subunit TFIIH core complex composed of XPB/repB, XPD/repD, gtf2h1, gtf2h2, gtf2h3, gtf2h4 and gtf2h5, which is active in NER. The core complex associates with the 3-subunit CDK-activating kinase (CAK) module composed of cycH/cyclin H, cdk7 and mnat1 to form the 10-subunit holoenzyme (holo-TFIIH) active in transcription.

Its subcellular location is the nucleus. It catalyses the reaction Couples ATP hydrolysis with the unwinding of duplex DNA by translocating in the 3'-5' direction.. The enzyme catalyses ATP + H2O = ADP + phosphate + H(+). In terms of biological role, ATP-dependent 3'-5' DNA helicase/translocase; binds dsDNA rather than ssDNA, unzipping it in a translocase rather than classical helicase activity. Component of the general transcription and DNA repair factor IIH (TFIIH) core complex. When complexed to CDK-activating kinase (CAK), involved in RNA transcription by RNA polymerase II. The ATPase activity of XPB/ERCC3, but not its helicase activity, is required for DNA opening; it may wrap around the damaged DNA wedging it open, causing localized melting and twisting that allows XPD/ERCC2 helicase to anchor. The ATP-dependent helicase activity of XPB/ERCC3 may be required for promoter escape. Also involved in transcription-coupled nucleotide excision repair (NER) of damaged DNA. In NER, TFIIH acts by opening DNA around the lesion to allow the excision of the damaged oligonucleotide and its replacement by a new DNA fragment. The structure of the TFIIH transcription complex differs from the NER-TFIIH complex. The protein is General transcription and DNA repair factor IIH helicase/translocase subunit XPB of Dictyostelium discoideum (Social amoeba).